The following is a 380-amino-acid chain: tRNA-specific 2-thiouridylase MnmA (380 aa).

ATP-binding positions include 11-18 (GMSGGVDS) and Met-37. The segment at 92 to 94 (NPD) is interaction with target base in tRNA. Cys-97 (nucleophile) is an active-site residue. Residues Cys-97 and Cys-197 are joined by a disulfide bond. An ATP-binding site is contributed by Gly-121. Positions 147-149 (KDQ) are interaction with tRNA. Cys-197 functions as the Cysteine persulfide intermediate in the catalytic mechanism. The tract at residues 331–332 (RY) is interaction with tRNA.

This sequence belongs to the MnmA/TRMU family.

The protein localises to the cytoplasm. It catalyses the reaction S-sulfanyl-L-cysteinyl-[protein] + uridine(34) in tRNA + AH2 + ATP = 2-thiouridine(34) in tRNA + L-cysteinyl-[protein] + A + AMP + diphosphate + H(+). Functionally, catalyzes the 2-thiolation of uridine at the wobble position (U34) of tRNA, leading to the formation of s(2)U34. The protein is tRNA-specific 2-thiouridylase MnmA of Karelsulcia muelleri (strain GWSS) (Sulcia muelleri).